The primary structure comprises 923 residues: Tyrosine-protein kinase receptor torso (923 aa).

An N-terminal signal peptide occupies residues 1 to 20 (MLIFYAKYAFIFWFFVGSNQ). Over 21 to 399 (GEMLLMDKIS…VLLSEGNMVK (379 aa)) the chain is Extracellular. N-linked (GlcNAc...) asparagine glycosylation is found at Asn37, Asn63, Asn107, Asn142, Asn146, Asn287, Asn298, Asn314, Asn326, Asn342, Asn348, and Asn377. The helical transmembrane segment at 400-420 (LVLFIIVPICCILMLCSLTFC) threads the bilayer. Residues 421 to 923 (RRNRSEVQAL…EEELYLEPLN (503 aa)) lie on the Cytoplasmic side of the membrane. The region spanning 475 to 874 (VLLQDVLGEG…TFSALKHRLG (400 aa)) is the Protein kinase domain. ATP is bound by residues 481 to 489 (LGEGAFGLV) and Lys502. Ser608 carries the phosphoserine modification. Residues 656–687 (YIPKTAEAPKDRPKRKLKPQPKKDSKQDFKSD) form a disordered region. The segment covering 676 to 687 (PKKDSKQDFKSD) has biased composition (basic and acidic residues). Asp741 acts as the Proton acceptor in catalysis.

This sequence belongs to the protein kinase superfamily. Tyr protein kinase family. Mg(2+) serves as cofactor. May be auto-phosphorylated on tyrosine residues.

Its subcellular location is the membrane. It catalyses the reaction L-tyrosyl-[protein] + ATP = O-phospho-L-tyrosyl-[protein] + ADP + H(+). Functionally, probable receptor tyrosine kinase which is required for determination of anterior and posterior terminal structures in the embryo. During postembryonic development, involved in the initiation of metamorphosis probably by inducing the production of ecdysone in response to prothoracicotropic hormone Ptth. Binding to Ptth stimulates activation of canonical MAPK signaling leading to ERK phosphorylation. The protein is Tyrosine-protein kinase receptor torso (tor) of Drosophila melanogaster (Fruit fly).